We begin with the raw amino-acid sequence, 341 residues long: Aspartate carbamoyltransferase catalytic subunit (341 aa).

Residues Arg89 and Thr90 each contribute to the carbamoyl phosphate site. Lys117 lines the L-aspartate pocket. 3 residues coordinate carbamoyl phosphate: Arg139, His169, and Gln172. Positions 202 and 257 each coordinate L-aspartate. Carbamoyl phosphate-binding residues include Gly298 and Pro299.

It belongs to the aspartate/ornithine carbamoyltransferase superfamily. ATCase family. As to quaternary structure, heterododecamer (2C3:3R2) of six catalytic PyrB chains organized as two trimers (C3), and six regulatory PyrI chains organized as three dimers (R2).

It carries out the reaction carbamoyl phosphate + L-aspartate = N-carbamoyl-L-aspartate + phosphate + H(+). Its pathway is pyrimidine metabolism; UMP biosynthesis via de novo pathway; (S)-dihydroorotate from bicarbonate: step 2/3. In terms of biological role, catalyzes the condensation of carbamoyl phosphate and aspartate to form carbamoyl aspartate and inorganic phosphate, the committed step in the de novo pyrimidine nucleotide biosynthesis pathway. The sequence is that of Aspartate carbamoyltransferase catalytic subunit from Paraburkholderia xenovorans (strain LB400).